Consider the following 178-residue polypeptide: Large ribosomal subunit protein uL6 (178 aa).

This sequence belongs to the universal ribosomal protein uL6 family. Part of the 50S ribosomal subunit.

This protein binds to the 23S rRNA, and is important in its secondary structure. It is located near the subunit interface in the base of the L7/L12 stalk, and near the tRNA binding site of the peptidyltransferase center. The protein is Large ribosomal subunit protein uL6 of Opitutus terrae (strain DSM 11246 / JCM 15787 / PB90-1).